The primary structure comprises 542 residues: CTP synthase (542 aa).

The interval 1–265 (MTRYIFVTGG…DDFVVERFGL (265 aa)) is amidoligase domain. Serine 13 provides a ligand contact to CTP. Serine 13 contributes to the UTP binding site. ATP contacts are provided by residues 14–19 (SLGKGI) and aspartate 71. Aspartate 71 and glutamate 139 together coordinate Mg(2+). CTP is bound by residues 146–148 (DIE), 186–191 (KTKPTQ), and lysine 222. Residues 186–191 (KTKPTQ) and lysine 222 each bind UTP. The Glutamine amidotransferase type-1 domain maps to 290–541 (TIAMVGKYME…VKAALAQKNK (252 aa)). Glycine 351 provides a ligand contact to L-glutamine. Cysteine 378 serves as the catalytic Nucleophile; for glutamine hydrolysis. L-glutamine-binding positions include 379–382 (LGMQ), glutamate 402, and arginine 469. Active-site residues include histidine 514 and glutamate 516.

Belongs to the CTP synthase family. In terms of assembly, homotetramer.

It catalyses the reaction UTP + L-glutamine + ATP + H2O = CTP + L-glutamate + ADP + phosphate + 2 H(+). The enzyme catalyses L-glutamine + H2O = L-glutamate + NH4(+). It carries out the reaction UTP + NH4(+) + ATP = CTP + ADP + phosphate + 2 H(+). It functions in the pathway pyrimidine metabolism; CTP biosynthesis via de novo pathway; CTP from UDP: step 2/2. With respect to regulation, allosterically activated by GTP, when glutamine is the substrate; GTP has no effect on the reaction when ammonia is the substrate. The allosteric effector GTP functions by stabilizing the protein conformation that binds the tetrahedral intermediate(s) formed during glutamine hydrolysis. Inhibited by the product CTP, via allosteric rather than competitive inhibition. Functionally, catalyzes the ATP-dependent amination of UTP to CTP with either L-glutamine or ammonia as the source of nitrogen. Regulates intracellular CTP levels through interactions with the four ribonucleotide triphosphates. The chain is CTP synthase from Pseudomonas entomophila (strain L48).